The following is a 182-amino-acid chain: Bis(5'-nucleosyl)-tetraphosphatase [asymmetrical] (182 aa).

Residues 3 to 110 (KQLYFSKFPV…IPRKKADFSE (108 aa)) form the HIT domain. Substrate-binding positions include N28, Q84, and 90-93 (GQTV). The Histidine triad motif motif lies at 95–99 (HVHVH). The active-site Tele-AMP-histidine intermediate is H97. H99 is a binding site for substrate. The segment at 135 to 161 (RYAGDERPPTSMRQAIPKDEDRKPRTL) is disordered. Residues 150 to 161 (IPKDEDRKPRTL) are compositionally biased toward basic and acidic residues.

It catalyses the reaction P(1),P(4)-bis(5'-guanosyl) tetraphosphate + H2O = GMP + GTP + 2 H(+). In terms of biological role, asymmetrically hydrolyzes Ap4A to yield AMP and ATP. This Schizosaccharomyces pombe (strain 972 / ATCC 24843) (Fission yeast) protein is Bis(5'-nucleosyl)-tetraphosphatase [asymmetrical] (aph1).